An 823-amino-acid chain; its full sequence is Ankyrin repeat domain-containing protein 20A1 (823 aa).

ANK repeat units follow at residues 66–95 (QHRTALHLACTSGHVQVVTLLVNRKCQIDV), 99–128 (ENRTPLIQAVHCQEEACAVILLEHGANPNL), 132–161 (YGNTALHYAVYSESTSLAEKLLSHGAHIEA), 165–194 (DNNTPLLFAIICKKEKMVEFLLKKKASSHA), and 198–227 (LRRSALMLAVYYDSPGIVNILLKQNIDVFA). Disordered regions lie at residues 301-343 (VPEK…EVED) and 355-402 (VQTL…LSEN). A compositionally biased stretch (basic and acidic residues) spans 372 to 384 (QERHERSEKKQPQ). 3 coiled-coil regions span residues 431 to 480 (KKLK…KQLE), 565 to 724 (EMIT…NNST), and 776 to 805 (LVLEEKSKKLMNECDHLKESLFQYEREKTE).

This is Ankyrin repeat domain-containing protein 20A1 (ANKRD20A1) from Homo sapiens (Human).